A 1272-amino-acid polypeptide reads, in one-letter code: Fused isobutyryl-CoA mutase (1272 aa).

The 139-residue stretch at 20–158 (RLRFVTAAAL…ARCAEGARAA (139 aa)) folds into the B12-binding domain. Adenosylcob(III)alamin is bound at residue histidine 33. Positions 163–536 (ESQVGAWAAE…YRHVAEALRK (374 aa)) are GTPase chaperone MeaI. Residues 193–240 (GAVARNPSSEASRVAAAGRGDHLDRGVRAASTADTADTANTANTANTA) form a disordered region. Residues 221-240 (AASTADTADTANTANTANTA) are compositionally biased toward low complexity. 334-339 (GAGKSS) contacts GTP. Mg(2+) is bound by residues serine 338, isoleucine 363, aspartate 364, and aspartate 377. Residue arginine 380 coordinates GTP. Residues glutamate 429 and threonine 430 each contribute to the Mg(2+) site. 476–479 (NKFD) contributes to the GTP binding site. The tract at residues 537-758 (HGLRSGGGRL…MLDNLPGYFP (222 aa)) is linker. Low complexity-rich tracts occupy residues 614–631 (TVAT…KANA) and 639–663 (ANAS…ATPT). The interval 614–667 (TVATSASPGASASSKANACTSTSSKANASPGANTTANSNASATSGTATPTDALN) is disordered. 7 residues coordinate substrate: phenylalanine 766, arginine 801, arginine 907, tyrosine 951, serine 1000, arginine 1035, and lysine 1040. GTP contacts are provided by glutamate 1152 and asparagine 1271.

The protein belongs to the IcmF family. Homodimer. It depends on adenosylcob(III)alamin as a cofactor. Mg(2+) is required as a cofactor.

The catalysed reaction is 2-methylpropanoyl-CoA = butanoyl-CoA. It carries out the reaction GTP + H2O = GDP + phosphate + H(+). Functionally, catalyzes the reversible interconversion of isobutyryl-CoA and n-butyryl-CoA, using radical chemistry. Also exhibits GTPase activity, associated with its G-protein domain (MeaI) that functions as a chaperone that assists cofactor delivery and proper holo-enzyme assembly. Does not exhibit methylmalonyl-CoA mutase (MCM) activity. The chain is Fused isobutyryl-CoA mutase from Paraburkholderia xenovorans (strain LB400).